A 345-amino-acid chain; its full sequence is D-erythrose-4-phosphate dehydrogenase (345 aa).

Residue 11–12 (RI) participates in NAD(+) binding. Substrate contacts are provided by residues 158-160 (SCT), arginine 204, 217-218 (TK), and arginine 240. Cysteine 159 acts as the Nucleophile in catalysis. Asparagine 322 contributes to the NAD(+) binding site.

This sequence belongs to the glyceraldehyde-3-phosphate dehydrogenase family. Epd subfamily. Homotetramer.

The protein localises to the cytoplasm. The enzyme catalyses D-erythrose 4-phosphate + NAD(+) + H2O = 4-phospho-D-erythronate + NADH + 2 H(+). It participates in cofactor biosynthesis; pyridoxine 5'-phosphate biosynthesis; pyridoxine 5'-phosphate from D-erythrose 4-phosphate: step 1/5. Its function is as follows. Catalyzes the NAD-dependent conversion of D-erythrose 4-phosphate to 4-phosphoerythronate. The polypeptide is D-erythrose-4-phosphate dehydrogenase (Vibrio campbellii (strain ATCC BAA-1116)).